The sequence spans 156 residues: V-type proton ATPase 16 kDa proteolipid subunit c (156 aa).

The Lumenal segment spans residues 1–7 (MAENPIY). A helical membrane pass occupies residues 8 to 30 (GPFFGVMGAASAIIFSALGAAYG). At 31-52 (TAKSGTGIAAMSVMRPELIMKS) the chain is on the cytoplasmic side. The chain crosses the membrane as a helical span at residues 53 to 73 (IIPVVMAGIIAIYGLVVAVLI). At 74–92 (AGSLDAPSNNYTLYKGFIH) the chain is on the lumenal side. Residues 93 to 114 (LGAGLAVGFSGLAAGFAIGIVG) traverse the membrane as a helical segment. Topologically, residues 115 to 126 (DAGVRGTAQQPR) are cytoplasmic. A helical membrane pass occupies residues 127–152 (LFVGMILILIFAEVLGLYGLIVAIYL). Residues 153 to 156 (YTKQ) are Lumenal-facing.

It belongs to the V-ATPase proteolipid subunit family. V-ATPase is a heteromultimeric enzyme made up of two complexes: the ATP-hydrolytic V1 complex and the proton translocation V0 complex. The V1 complex consists of three catalytic AB heterodimers that form a heterohexamer, three peripheral stalks each consisting of EG heterodimers, one central rotor including subunits D and F, and the regulatory subunits C and H. The proton translocation complex V0 consists of the proton transport subunit a, a ring of proteolipid subunits c9c'', rotary subunit d, subunits e and f, and the accessory subunits VhaAC45 and ATP6AP2.

It localises to the membrane. Its function is as follows. Proton-conducting pore forming subunit of the V0 complex of vacuolar(H+)-ATPase (V-ATPase), a multisubunit enzyme composed of a peripheral complex (V1) that hydrolyzes ATP and a membrane integral complex (V0) that translocates protons. V-ATPase is responsible for acidifying and maintaining the pH of intracellular compartments and in some cell types, is targeted to the plasma membrane, where it is responsible for acidifying the extracellular environment. This chain is V-type proton ATPase 16 kDa proteolipid subunit c (VHA16), found in Heliothis virescens (Tobacco budworm moth).